The primary structure comprises 274 residues: 2,3,4,5-tetrahydropyridine-2,6-dicarboxylate N-succinyltransferase (274 aa).

The substrate site is built by R104 and D141.

Belongs to the transferase hexapeptide repeat family. As to quaternary structure, homotrimer.

Its subcellular location is the cytoplasm. It catalyses the reaction (S)-2,3,4,5-tetrahydrodipicolinate + succinyl-CoA + H2O = (S)-2-succinylamino-6-oxoheptanedioate + CoA. It functions in the pathway amino-acid biosynthesis; L-lysine biosynthesis via DAP pathway; LL-2,6-diaminopimelate from (S)-tetrahydrodipicolinate (succinylase route): step 1/3. This is 2,3,4,5-tetrahydropyridine-2,6-dicarboxylate N-succinyltransferase from Shewanella baltica (strain OS155 / ATCC BAA-1091).